A 293-amino-acid polypeptide reads, in one-letter code: NAD-dependent protein deacetylase (293 aa).

The 278-residue stretch at 5-282 folds into the Deacetylase sirtuin-type domain; that stretch reads PAHDHHTLQD…LHAPPHLPRA (278 aa). NAD(+)-binding positions include 27–47 and 105–108; these read GAGCSTDSGIPDYRDLQGGWK and QNVD. Catalysis depends on His123, which acts as the Proton acceptor. 4 residues coordinate Zn(2+): Cys131, Cys134, Cys182, and Cys185. Residues 222 to 224, 248 to 250, and Cys266 each bind NAD(+); these read GSS and NFG.

Belongs to the sirtuin family. Class II subfamily. Zn(2+) is required as a cofactor.

The protein localises to the cytoplasm. The enzyme catalyses N(6)-acetyl-L-lysyl-[protein] + NAD(+) + H2O = 2''-O-acetyl-ADP-D-ribose + nicotinamide + L-lysyl-[protein]. Functionally, NAD-dependent protein deacetylase which modulates the activities of several enzymes which are inactive in their acetylated form. The sequence is that of NAD-dependent protein deacetylase from Xanthomonas axonopodis pv. citri (strain 306).